Consider the following 177-residue polypeptide: Trafficking regulator of GLUT4 1 (177 aa).

At 1–105 (MAHPVQSEFP…QDQEAPRDYL (105 aa)) the chain is on the cytoplasmic side. Serine 48, serine 87, and serine 88 each carry phosphoserine. A disordered region spans residues 71 to 92 (EAPLPRSPSRASSRRASSIATT). A compositionally biased stretch (low complexity) spans 72-88 (APLPRSPSRASSRRASS). Residues 106–126 (ILAVVACFCPVWPLNLIPLII) constitute an intramembrane region (helical). Over 127-153 (SIMSRSSMQQGNVDGARRLGRLARLLS) the chain is Cytoplasmic. The chain crosses the membrane as a helical span at residues 154 to 174 (ITLIIMGIVIIMVAVTVNFTV). Over 175-177 (QKK) the chain is Extracellular.

This sequence belongs to the CD225/Dispanin family. As to quaternary structure, interacts with SLC2A4; the interaction is required for proper SLC2A4 reacycling after insulin stimulation. Expressed at high levels in heart, mammary gland, adrenal gland, stomach, smooth muscle and skeletal muscle, and at lower levels in brain and lung. Strongly down-regulated in lung cancer tissues, due to hypermethylation of the corresponding locus. Expressed in adipose tissue.

It localises to the cell membrane. The protein localises to the endomembrane system. The protein resides in the cytoplasm. Its subcellular location is the perinuclear region. Regulates insulin-mediated adipose tissue glucose uptake and transport by modulation of SLC2A4 recycling. Not required for SLC2A4 membrane fusion upon an initial stimulus, but rather is necessary for proper protein recycling during prolonged insulin stimulation. This Homo sapiens (Human) protein is Trafficking regulator of GLUT4 1.